The chain runs to 199 residues: Holliday junction branch migration complex subunit RuvA (199 aa).

The segment at 1–64 (MIALLTGKLA…EDAINLYGFR (64 aa)) is domain I. A domain II region spans residues 65 to 143 (TMEEKEMFQL…KLGHGPLQQD (79 aa)). Residues 144–148 (VAPAD) form a flexible linker region. Positions 149–199 (AHNDMRDDVVSALVNLGYKEAVVQKTVDEIGVAADATVESLLKQALKKLMK) are domain III.

Belongs to the RuvA family. As to quaternary structure, homotetramer. Forms an RuvA(8)-RuvB(12)-Holliday junction (HJ) complex. HJ DNA is sandwiched between 2 RuvA tetramers; dsDNA enters through RuvA and exits via RuvB. An RuvB hexamer assembles on each DNA strand where it exits the tetramer. Each RuvB hexamer is contacted by two RuvA subunits (via domain III) on 2 adjacent RuvB subunits; this complex drives branch migration. In the full resolvosome a probable DNA-RuvA(4)-RuvB(12)-RuvC(2) complex forms which resolves the HJ.

It is found in the cytoplasm. Its function is as follows. The RuvA-RuvB-RuvC complex processes Holliday junction (HJ) DNA during genetic recombination and DNA repair, while the RuvA-RuvB complex plays an important role in the rescue of blocked DNA replication forks via replication fork reversal (RFR). RuvA specifically binds to HJ cruciform DNA, conferring on it an open structure. The RuvB hexamer acts as an ATP-dependent pump, pulling dsDNA into and through the RuvAB complex. HJ branch migration allows RuvC to scan DNA until it finds its consensus sequence, where it cleaves and resolves the cruciform DNA. In Geotalea daltonii (strain DSM 22248 / JCM 15807 / FRC-32) (Geobacter daltonii), this protein is Holliday junction branch migration complex subunit RuvA.